Reading from the N-terminus, the 412-residue chain is Tryptophan synthase beta chain 1 (412 aa).

At Lys103 the chain carries N6-(pyridoxal phosphate)lysine.

Belongs to the TrpB family. Tetramer of two alpha and two beta chains. Pyridoxal 5'-phosphate serves as cofactor.

The catalysed reaction is (1S,2R)-1-C-(indol-3-yl)glycerol 3-phosphate + L-serine = D-glyceraldehyde 3-phosphate + L-tryptophan + H2O. It functions in the pathway amino-acid biosynthesis; L-tryptophan biosynthesis; L-tryptophan from chorismate: step 5/5. The beta subunit is responsible for the synthesis of L-tryptophan from indole and L-serine. This Chlamydia caviae (strain ATCC VR-813 / DSM 19441 / 03DC25 / GPIC) (Chlamydophila caviae) protein is Tryptophan synthase beta chain 1 (trpB1).